A 314-amino-acid chain; its full sequence is Large ribosomal subunit protein uL10 (314 aa).

The disordered stretch occupies residues 285 to 314 (GAAAGGAAAEEEKEEEEESDEEGGFGDLFG). Residues 293-308 (AEEEKEEEEESDEEGG) are compositionally biased toward acidic residues. Position 303 is a phosphoserine; by CK1 (Ser303).

The protein belongs to the universal ribosomal protein uL10 family. Component of the large ribosomal subunit. P0 forms a pentameric complex by interaction with dimers of P1 and P2. Post-translationally, phosphorylated.

Its function is as follows. Ribosomal protein P0 is the functional equivalent of E.coli protein L10. The protein is Large ribosomal subunit protein uL10 of Podospora anserina (Pleurage anserina).